A 348-amino-acid polypeptide reads, in one-letter code: Rhodopsin (348 aa).

Position 1 is an N-acetylmethionine (M1). The Extracellular portion of the chain corresponds to 1-36 (MNGTEGLNFYVPFSNKTGVVRSPFEYPQYYLAEPWQ). 2 N-linked (GlcNAc...) asparagine glycosylation sites follow: N2 and N15. The chain crosses the membrane as a helical span at residues 37–61 (FSVLAAYMFLLIVLGFPINFLTLYV). The Cytoplasmic segment spans residues 62–73 (TVQHKKLRTPLN). Residues 74–99 (YILLNLAVANLFMVFGGFTTTLYTSL) form a helical membrane-spanning segment. Over 100-111 (HAYFVFGPTGCN) the chain is Extracellular. A disulfide bridge links C110 with C187. Residues 112 to 133 (LEGFFATLGGEIALWSLVVLAI) form a helical membrane-spanning segment. Residues 134–136 (ERY) carry the 'Ionic lock' involved in activated form stabilization motif. Residues 134–152 (ERYVVVCKPMSNFRFGENH) lie on the Cytoplasmic side of the membrane. A helical transmembrane segment spans residues 153–173 (AIMGLALTWIMAMACAAAPLV). The Extracellular segment spans residues 174–202 (GWSRYIPEGMQCSCGIDYYTSRQEVNNES). E201 lines the Zn(2+) pocket. A helical transmembrane segment spans residues 203–227 (FVIYMFVVHFTIPLVIIFFCYGQLV). Residues 228–252 (FTVKEAAAQQQESATTQKAEKEVTR) are Cytoplasmic-facing. The chain crosses the membrane as a helical span at residues 253-274 (MVIIMVVAFLICWVPYASVAFY). The Extracellular portion of the chain corresponds to 275–286 (IFTHQGSDFGPI). Q279 contacts Zn(2+). A helical transmembrane segment spans residues 287-306 (FMTIPSFFAKSSSIYNPVIY). At K296 the chain carries N6-(retinylidene)lysine. Over 307–348 (IMMNKQFRNCMLTTLCCGRNPLGDDEASTTASKTETSQVAPA) the chain is Cytoplasmic. 2 S-palmitoyl cysteine lipidation sites follow: C322 and C323. S334 is modified (phosphoserine). Phosphothreonine is present on residues T335 and T336. Residue S338 is modified to Phosphoserine. A phosphothreonine mark is found at T340 and T342. S343 is modified (phosphoserine).

This sequence belongs to the G-protein coupled receptor 1 family. Opsin subfamily. As to quaternary structure, homodimer. May form a complex composed of RHO, GRK1 and RCVRN in a Ca(2+)-dependent manner; RCVRN prevents the interaction between GRK1 and RHO. Interacts with GRK1. Interacts (phosphorylated form) with SAG. Interacts with GNAT1. Interacts with GNAT3. SAG and G-proteins compete for a common binding site. Interacts with PRCD; the interaction promotes PRCD stability. Forms a complex with ASAP1 and ARF4. Forms a complex with ASAP1, RAB11A, Rabin8/RAB3IP, ARF4 and RAB11FIP3; the complex regulates Golgi-to-cilia rhodopsin/RHO transport in photoreceptors. Contains one covalently linked retinal chromophore. Upon light absorption, the covalently bound 11-cis-retinal is converted to all-trans-retinal. After hydrolysis of the Schiff base and release of the covalently bound all-trans-retinal, active rhodopsin is regenerated by binding of a fresh molecule of 11-cis-retinal.

It localises to the membrane. Its subcellular location is the cell projection. It is found in the cilium. The protein localises to the photoreceptor outer segment. In terms of biological role, photoreceptor required for image-forming vision at low light intensity. Light-induced isomerization of 11-cis to all-trans retinal triggers a conformational change that activates signaling via G-proteins. Signaling mediates the activation of phospholipase C. Subsequent receptor phosphorylation mediates displacement of the bound G-protein alpha subunit by arrestin and terminates signaling. The polypeptide is Rhodopsin (RHO) (Tursiops truncatus (Atlantic bottle-nosed dolphin)).